Consider the following 450-residue polypeptide: tRNA-2-methylthio-N(6)-dimethylallyladenosine synthase (450 aa).

Residues 14–132 (GEFFIETWGC…FPNYLNEVKK (119 aa)) enclose the MTTase N-terminal domain. 6 residues coordinate [4Fe-4S] cluster: C23, C59, C93, C169, C173, and C176. A Radical SAM core domain is found at 155-385 (RKNSMKAFVT…VEVVNEISAK (231 aa)). The region spanning 388–450 (KAYEGKIEEV…NSFSLTGEEI (63 aa)) is the TRAM domain.

Belongs to the methylthiotransferase family. MiaB subfamily. Monomer. [4Fe-4S] cluster is required as a cofactor.

The protein resides in the cytoplasm. The catalysed reaction is N(6)-dimethylallyladenosine(37) in tRNA + (sulfur carrier)-SH + AH2 + 2 S-adenosyl-L-methionine = 2-methylsulfanyl-N(6)-dimethylallyladenosine(37) in tRNA + (sulfur carrier)-H + 5'-deoxyadenosine + L-methionine + A + S-adenosyl-L-homocysteine + 2 H(+). In terms of biological role, catalyzes the methylthiolation of N6-(dimethylallyl)adenosine (i(6)A), leading to the formation of 2-methylthio-N6-(dimethylallyl)adenosine (ms(2)i(6)A) at position 37 in tRNAs that read codons beginning with uridine. In Clostridium botulinum (strain Langeland / NCTC 10281 / Type F), this protein is tRNA-2-methylthio-N(6)-dimethylallyladenosine synthase.